We begin with the raw amino-acid sequence, 101 residues long: Ubiquitin-related modifier 1 (101 aa).

Gly-101 is subject to 1-thioglycine. Gly-101 participates in a covalent cross-link: Glycyl lysine isopeptide (Gly-Lys) (interchain with K-? in acceptor proteins).

The protein belongs to the URM1 family. C-terminal thiocarboxylation occurs in 2 steps, it is first acyl-adenylated (-COAMP) via the hesA/moeB/thiF part of UBA4, then thiocarboxylated (-COSH) via the rhodanese domain of UBA4.

The protein localises to the cytoplasm. It functions in the pathway tRNA modification; 5-methoxycarbonylmethyl-2-thiouridine-tRNA biosynthesis. Functionally, acts as a sulfur carrier required for 2-thiolation of mcm(5)S(2)U at tRNA wobble positions of cytosolic tRNA(Lys), tRNA(Glu) and tRNA(Gln). Serves as sulfur donor in tRNA 2-thiolation reaction by being thiocarboxylated (-COSH) at its C-terminus by the MOCS3 homolog UBA4. The sulfur is then transferred to tRNA to form 2-thiolation of mcm(5)S(2)U. Prior mcm(5) tRNA modification by the elongator complex is required for 2-thiolation. Also acts as a ubiquitin-like protein (UBL) that is covalently conjugated via an isopeptide bond to lysine residues of target proteins such as AHP1. The thiocarboxylated form serves as substrate for conjugation and oxidative stress specifically induces the formation of UBL-protein conjugates. The polypeptide is Ubiquitin-related modifier 1 (Scheffersomyces stipitis (strain ATCC 58785 / CBS 6054 / NBRC 10063 / NRRL Y-11545) (Yeast)).